The primary structure comprises 309 residues: Syndecan-1 (309 aa).

The signal sequence occupies residues 1–22 (MRRAALWLWLCALALRLQPVLP). Topologically, residues 23–253 (QIVTVNVPPE…GLLDRKEVLG (231 aa)) are extracellular. 2 disordered regions span residues 28-57 (NVPP…DITL) and 145-185 (TTAQ…GGTS). Residues 32–42 (EDQDGSGDDSD) are compositionally biased toward acidic residues. An O-linked (Xyl...) (chondroitin sulfate) serine glycan is attached at Ser37. Asn43 carries N-linked (GlcNAc...) asparagine glycosylation. O-linked (Xyl...) (heparan sulfate) serine glycosylation is found at Ser45 and Ser47. Low complexity predominate over residues 173–183 (GQPDQQPPSGG). Residues Ser205 and Ser215 are each glycosylated (O-linked (Xyl...) (chondroitin sulfate) serine). The chain crosses the membrane as a helical span at residues 254–274 (GVIAGGLVGLIFAVCLVGFML). Topologically, residues 275-309 (YRMKKKDEGSYSLEEPKQANGGAYQKPTKQEEFYA) are cytoplasmic. The tract at residues 283 to 309 (GSYSLEEPKQANGGAYQKPTKQEEFYA) is disordered. The residue at position 284 (Ser284) is a Phosphoserine.

The protein belongs to the syndecan proteoglycan family. In terms of assembly, interacts with CDCP1. Interacts (via C-terminus) with TIAM1 (via PDZ domain). Interacts with MDK. Post-translationally, shedding is enhanced by a number of factors such as heparanase, thrombin or EGF. Also by stress and wound healing. PMA-mediated shedding is inhibited by TIMP3.

The protein resides in the membrane. Its subcellular location is the secreted. It localises to the extracellular exosome. In terms of biological role, cell surface proteoglycan that contains both heparan sulfate and chondroitin sulfate and that links the cytoskeleton to the interstitial matrix. Regulates exosome biogenesis in concert with SDCBP and PDCD6IP. Able to induce its own expression in dental mesenchymal cells and also in the neighboring dental epithelial cells via an MSX1-mediated pathway. This is Syndecan-1 from Mesocricetus auratus (Golden hamster).